The primary structure comprises 314 residues: tRNA pseudouridine synthase B (314 aa).

The active-site Nucleophile is the D41.

Belongs to the pseudouridine synthase TruB family. Type 1 subfamily.

It carries out the reaction uridine(55) in tRNA = pseudouridine(55) in tRNA. Its function is as follows. Responsible for synthesis of pseudouridine from uracil-55 in the psi GC loop of transfer RNAs. This Prochlorococcus marinus (strain NATL2A) protein is tRNA pseudouridine synthase B.